Consider the following 617-residue polypeptide: Protein 4.1 (617 aa).

Residues 1-282 enclose the FERM domain; that stretch reads MHCKVSLLDD…EHHTFFRLTS (282 aa). At Tyr13 the chain carries Phosphotyrosine. Residue Thr169 is modified to Phosphothreonine. Residues 308 to 401 form a disordered region; it reads TRQASALIDR…AEPEPSEAWK (94 aa). Phosphoserine is present on residues Ser312, Ser331, and Ser333. Residues 348-361 show a composition bias toward low complexity; it reads RPTSAPAIAPSPAA. A compositionally biased stretch (acidic residues) spans 387–396; that stretch reads APPEDAEPEP. The spectrin--actin-binding stretch occupies residues 401–466; that stretch reads KKKRERLDGE…WDKRLSTHSP (66 aa). Tyr413 bears the Phosphotyrosine; by EGFR mark. Phosphoserine is present on residues Ser417, Ser427, Ser437, and Ser462. Ser465 is subject to Phosphoserine; by CDK1. The tract at residues 467 to 617 is C-terminal (CTD); it reads FRTLNINGQI…VHQETEISEE (151 aa). A phosphothreonine mark is found at Thr489 and Thr612.

Binds with a high affinity to glycophorin and with lower affinity to band III protein. Associates with the nuclear mitotic apparatus. Binds calmodulin, CPAP and DLG1. Also found to associate with contractile apparatus and tight junctions. Interacts with NUMA1; this interaction is negatively regulated by CDK1 during metaphase and promotes anaphase-specific localization of NUMA1 in symmetrically dividing cells. Interacts with ATP2B1; regulates small intestinal calcium absorption through regulation of membrane expression of ATP2B1. Phosphorylated at multiple sites by different protein kinases and each phosphorylation event selectively modulates the protein's functions. Post-translationally, phosphorylation on Tyr-413 reduces the ability of 4.1 to promote the assembly of the spectrin/actin/4.1 ternary complex.

Its subcellular location is the nucleus. It localises to the cytoplasm. The protein resides in the cytoskeleton. It is found in the cell cortex. In terms of biological role, protein 4.1 is a major structural element of the erythrocyte membrane skeleton. It plays a key role in regulating membrane physical properties of mechanical stability and deformability by stabilizing spectrin-actin interaction. Recruits DLG1 to membranes. Required for dynein-dynactin complex and NUMA1 recruitment at the mitotic cell cortex during anaphase. This chain is Protein 4.1, found in Bos taurus (Bovine).